The chain runs to 964 residues: Glycine dehydrogenase (decarboxylating) (964 aa).

Lys710 carries the N6-(pyridoxal phosphate)lysine modification.

Belongs to the GcvP family. As to quaternary structure, the glycine cleavage system is composed of four proteins: P, T, L and H. The cofactor is pyridoxal 5'-phosphate.

It catalyses the reaction N(6)-[(R)-lipoyl]-L-lysyl-[glycine-cleavage complex H protein] + glycine + H(+) = N(6)-[(R)-S(8)-aminomethyldihydrolipoyl]-L-lysyl-[glycine-cleavage complex H protein] + CO2. In terms of biological role, the glycine cleavage system catalyzes the degradation of glycine. The P protein binds the alpha-amino group of glycine through its pyridoxal phosphate cofactor; CO(2) is released and the remaining methylamine moiety is then transferred to the lipoamide cofactor of the H protein. This chain is Glycine dehydrogenase (decarboxylating), found in Saccharophagus degradans (strain 2-40 / ATCC 43961 / DSM 17024).